The following is a 249-amino-acid chain: 5'-nucleotidase SurE (249 aa).

Aspartate 9, aspartate 10, serine 40, and asparagine 92 together coordinate a divalent metal cation.

The protein belongs to the SurE nucleotidase family. A divalent metal cation is required as a cofactor.

The protein localises to the cytoplasm. It catalyses the reaction a ribonucleoside 5'-phosphate + H2O = a ribonucleoside + phosphate. Its function is as follows. Nucleotidase that shows phosphatase activity on nucleoside 5'-monophosphates. The chain is 5'-nucleotidase SurE from Shewanella baltica (strain OS223).